We begin with the raw amino-acid sequence, 513 residues long: Maturase K (513 aa).

It belongs to the intron maturase 2 family. MatK subfamily.

It localises to the plastid. It is found in the chloroplast. In terms of biological role, usually encoded in the trnK tRNA gene intron. Probably assists in splicing its own and other chloroplast group II introns. This is Maturase K from Cyrilla racemiflora (Swamp titi).